The chain runs to 175 residues: Transcription factor HES-3 (175 aa).

Residues 1-49 (MEKKRRARINLSLEQLRSLLERHYSHQIRKRKLEKADILELSVKYVRSL) enclose the bHLH domain. One can recognise an Orange domain in the interval 65-98 (YPSGFRGGLPGSSQRLRPGEDDSGLRCPLLLQRR). Residues 124 to 145 (PGPPAGGSQSPQSPFPPLGGLL) show a composition bias toward low complexity. The segment at 124-175 (PGPPAGGSQSPQSPFPPLGGLLESSTGILAPPPASNCQAENPRPGFRVWRPW) is disordered. The WRPW motif motif lies at 172-175 (WRPW).

As to quaternary structure, transcription repression requires formation of a complex with a corepressor protein of the Groucho/TLE family. Expressed exclusively in Purkinje cells.

The protein localises to the nucleus. Its function is as follows. Transcriptional repressor of genes that require a bHLH protein for their transcription. The polypeptide is Transcription factor HES-3 (Hes3) (Rattus norvegicus (Rat)).